Reading from the N-terminus, the 464-residue chain is CRISPR system endoribonuclease Csm6 (464 aa).

Residues 1-190 form a CARF domain region; sequence MEDLDALWER…LRILPNPHEA (190 aa). Positions 191–464 are HEPN domain; sequence LAEVDALFAK…LSPEPVPLGF (274 aa).

Belongs to the CRISPR-associated Csm6 family. Homodimer. The protein forms a twisted, head-to-head dimer; the composite ssRNase active site is formed at the dimer interface. It depends on Does not require a metal cofactor. as a cofactor.

With respect to regulation, non-specific ssRNase activity is allosterically activated about 1000-fold by cyclic tetraadenylate (cA4), which probably binds to its CARF domain. CRISPR (clustered regularly interspaced short palindromic repeat) is an adaptive immune system that provides protection against mobile genetic elements (viruses, transposable elements and conjugative plasmids). CRISPR clusters contain spacers, sequences complementary to antecedent mobile elements, and target invading nucleic acids. CRISPR clusters are transcribed and processed into CRISPR RNA (crRNA). The type III-A Csm effector complex binds crRNA and acts as a crRNA-guided RNase, DNase and cyclic oligoadenylate synthase; binding of target RNA cognate to the crRNA is required for all activities. This protein is not part of the Csm effector complex. Its function is as follows. A single-strand-specific endoribonuclease (ssRNase) producing free 5'-OH. Activity is approximately 1000-fold stimulated by cyclic oligoadenylate (cOA); only cyclic tetraadenylate (cA4) stimulates the ssRNase activity while linear oligoadenylates do not activate the RNase. Another study showed stimulation by linear tetraadenylate at very high concentrations, but did not examine stimulation by cA4. The protein is CRISPR system endoribonuclease Csm6 of Thermus thermophilus (strain ATCC 27634 / DSM 579 / HB8).